The primary structure comprises 127 residues: Protein ApaG (127 aa).

Residues 2–127 enclose the ApaG domain; sequence SELVEHIQVH…FRLAGPNQVH (126 aa).

In Chromohalobacter salexigens (strain ATCC BAA-138 / DSM 3043 / CIP 106854 / NCIMB 13768 / 1H11), this protein is Protein ApaG.